We begin with the raw amino-acid sequence, 194 residues long: Bis(5'-nucleosyl)-tetraphosphatase, symmetrical (194 aa).

The HD domain occupies 18-132 (RYNHSLRVAE…IFIADYIEPG (115 aa)). Histidine 21 serves as a coordination point for ADP. Fe cation contacts are provided by histidine 21, histidine 50, and aspartate 51. Residues 51–54 (DFCK), histidine 83, 109–110 (HT), aspartate 127, arginine 133, and 172–177 (TVYNKT) each bind ADP. Aspartate 127 is a Fe cation binding site.

It belongs to the Ap4A hydrolase YqeK family. As to quaternary structure, homodimer.

It carries out the reaction P(1),P(4)-bis(5'-adenosyl) tetraphosphate + H2O = 2 ADP + 2 H(+). Inhibited by EDTA. Its function is as follows. Hydrolyzes diadenosine 5',5'''-P1,P4-tetraphosphate (Ap4A) to yield ADP. Can also hydrolyze Ap3A, Ap5A, Ap4G, Ap4U and Gp4G, always releasing ADP or GDP as one of the products, but it exhibits a marked preference for Ap4A, which is mainly exerted at the substrate affinity level. This is Bis(5'-nucleosyl)-tetraphosphatase, symmetrical from Staphylococcus aureus (strain NCTC 8325 / PS 47).